A 328-amino-acid polypeptide reads, in one-letter code: Serine protease 27 (328 aa).

Residues 1-22 (MRQPHITALLLLPLLLRSGTEG) form the signal peptide. A propeptide spans 23–37 (AEAMRACGHPRMFNR) (activation peptide). The 243-residue stretch at 38–280 (MVGGEDALEG…HYQWIHQIIP (243 aa)) folds into the Peptidase S1 domain. Cysteines 63 and 79 form a disulfide. Histidine 78 (charge relay system) is an active-site residue. Asparagine 82 carries an N-linked (GlcNAc...) asparagine glycan. The Charge relay system role is filled by aspartate 127. 3 cysteine pairs are disulfide-bonded: cysteine 161-cysteine 238, cysteine 194-cysteine 217, and cysteine 228-cysteine 256. Serine 232 functions as the Charge relay system in the catalytic mechanism.

This sequence belongs to the peptidase S1 family.

It localises to the secreted. This chain is Serine protease 27 (Prss27), found in Rattus norvegicus (Rat).